The chain runs to 410 residues: MSEEKSGLVQRLMQGSLVTQIMVGLVAGIALAWLSKSHALAVGLLGELFVNALKAVAPLLVLVLVISSIANHQQGQKTNIRPIVMLYLLSTFFAAVVAVVASHLLPQNLTLQNASSQIVPPSGILEVLHGLLMSMVTNPIEAVMKANYIGILVWAIGLGFAFRHSSEGTRTFLNDASDAVTRLVRIVIRFAPVGIFGLVASILASTGFDALGQYASLLGLLLGCMLLMALVFNPLLVWWQIRRNPYPLVFTCLRESGVTAFFTRSSAANIPVNMALAKKLGLDEDTYTVSIPIGANISMAGASITITVLTLAAVHTLGIQIDVGSAILLSLVASVCACGASGVAGGSLLLIPVACNMFGIPNEIAMQVVAVGFIIGVLQDSAETALNSSADILFTAAACMAEDRRLEQNA.

10 helical membrane passes run 15-35 (GSLV…AWLS), 49-69 (FVNA…ISSI), 82-102 (PIVM…VVAS), 118-138 (IVPP…MVTN), 142-162 (AVMK…GFAF), 190-210 (FAPV…GFDA), 217-237 (LLGL…PLLV), 299-319 (MAGA…TLGI), 331-351 (LVAS…LLLI), and 358-378 (FGIP…IGVL).

Belongs to the dicarboxylate/amino acid:cation symporter (DAACS) (TC 2.A.23) family.

It is found in the cell inner membrane. It catalyses the reaction L-serine(in) + Na(+)(in) = L-serine(out) + Na(+)(out). The enzyme catalyses L-threonine(in) + Na(+)(in) = L-threonine(out) + Na(+)(out). Functionally, involved in the import of serine and threonine into the cell, with the concomitant import of sodium (symport system). The sequence is that of Serine/threonine transporter SstT from Erwinia tasmaniensis (strain DSM 17950 / CFBP 7177 / CIP 109463 / NCPPB 4357 / Et1/99).